The sequence spans 303 residues: Energy-coupling factor transporter ATP-binding protein EcfA2 (303 aa).

Positions 17-260 (LSVSNLSCFF…EAFLAHTTII (244 aa)) constitute an ABC transporter domain. 54-61 (GDSGSGKS) is a binding site for ATP.

This sequence belongs to the ABC transporter superfamily. Energy-coupling factor EcfA family. Forms a stable energy-coupling factor (ECF) transporter complex composed of 2 membrane-embedded substrate-binding proteins (S component), 2 ATP-binding proteins (A component) and 2 transmembrane proteins (T component).

The protein resides in the cell membrane. In terms of biological role, ATP-binding (A) component of a common energy-coupling factor (ECF) ABC-transporter complex. Unlike classic ABC transporters this ECF transporter provides the energy necessary to transport a number of different substrates. The chain is Energy-coupling factor transporter ATP-binding protein EcfA2 from Mycoplasma pneumoniae (strain ATCC 29342 / M129 / Subtype 1) (Mycoplasmoides pneumoniae).